We begin with the raw amino-acid sequence, 241 residues long: Probable transcriptional regulatory protein str0195 (241 aa).

It belongs to the TACO1 family. YeeN subfamily.

The protein localises to the cytoplasm. The protein is Probable transcriptional regulatory protein str0195 of Streptococcus thermophilus (strain CNRZ 1066).